The sequence spans 235 residues: Carbonic anhydrase 1 (235 aa).

In terms of domain architecture, Alpha-carbonic anhydrase spans 1–235 (GNKQSPVDIK…LKGRTVKASF (235 aa)). His-40 functions as the Proton donor/acceptor in the catalytic mechanism. Residues His-69, His-71, and His-94 each coordinate Zn(2+). Substrate is bound by residues Thr-174 and 174 to 175 (TH).

Belongs to the alpha-carbonic anhydrase family. Requires Zn(2+) as cofactor.

The protein resides in the cytoplasm. The catalysed reaction is hydrogencarbonate + H(+) = CO2 + H2O. It carries out the reaction urea = cyanamide + H2O. With respect to regulation, inhibited by acetazolamide. Functionally, catalyzes the reversible hydration of carbon dioxide. Can hydrate cyanamide to urea. The chain is Carbonic anhydrase 1 (CA1) from Oryctolagus cuniculus (Rabbit).